Here is a 276-residue protein sequence, read N- to C-terminus: SKA complex subunit 1 homolog (276 aa).

Residues 48 to 78 (VDVSLTAMEAQLQAVRRRLQEEREAFPKAKK) adopt a coiled-coil conformation.

It belongs to the SKA1 family.

This chain is SKA complex subunit 1 homolog, found in Oryza sativa subsp. japonica (Rice).